A 410-amino-acid chain; its full sequence is Arginine deiminase (410 aa).

Cysteine 400 (amidino-cysteine intermediate) is an active-site residue.

The protein belongs to the arginine deiminase family.

The protein localises to the cytoplasm. The catalysed reaction is L-arginine + H2O = L-citrulline + NH4(+). It functions in the pathway amino-acid degradation; L-arginine degradation via ADI pathway; carbamoyl phosphate from L-arginine: step 1/2. This chain is Arginine deiminase (arcA), found in Borreliella burgdorferi (strain ATCC 35210 / DSM 4680 / CIP 102532 / B31) (Borrelia burgdorferi).